The following is a 312-amino-acid chain: Apolipoprotein E (312 aa).

The first 18 residues, 1–18, serve as a signal peptide directing secretion; that stretch reads MKALWAVLLATLLTGCLA. Repeat copies occupy residues 72–93, 94–115, 116–137, 138–159, 160–181, 182–203, 204–225, and 226–247. The segment at 72 to 247 is 8 X 22 AA approximate tandem repeats; the sequence is VLMEDTMTEV…RLEEMREHME (176 aa). Met135 is subject to Methionine sulfoxide. Residues 150–160 form an LDL and other lipoprotein receptors binding region; the sequence is HLRKMRKRLMR. The LDL receptor binding stretch occupies residues 150–160; that stretch reads HLRKMRKRLMR. Position 154–157 (154–157) interacts with heparin; it reads MRKR. The tract at residues 202 to 282 is lipid-binding and lipoprotein association; the sequence is TANLGAGAAQ…SWFEPLVEDM (81 aa). 221-228 contacts heparin; it reads SERLRGRL. Positions 258-312 are homooligomerization; that stretch reads QQIRLQAEIFQARLKSWFEPLVEDMHRQLANLVEKIQSSVATNSVLSTSVPQENQ. The segment at 270–282 is specificity for association with VLDL; it reads RLKSWFEPLVEDM.

It belongs to the apolipoprotein A1/A4/E family. As to quaternary structure, homotetramer. May interact with ABCA1; functionally associated with ABCA1 in the biogenesis of HDLs. May interact with APP/A4 amyloid-beta peptide; the interaction is extremely stable in vitro but its physiological significance is unclear. May interact with MAPT. May interact with MAP2. In the cerebrospinal fluid, interacts with secreted SORL1. Interacts with PMEL; this allows the loading of PMEL luminal fragment on ILVs to induce fibril nucleation. In terms of processing, APOE exists as multiple glycosylated and sialylated glycoforms within cells and in plasma. The extent of glycosylation and sialylation are tissue and context specific. Post-translationally, glycated in plasma VLDL. Phosphorylated by FAM20C in the extracellular medium.

The protein localises to the secreted. The protein resides in the extracellular space. Its subcellular location is the extracellular matrix. It is found in the extracellular vesicle. It localises to the endosome. The protein localises to the multivesicular body. In terms of biological role, APOE is an apolipoprotein, a protein associating with lipid particles, that mainly functions in lipoprotein-mediated lipid transport between organs via the plasma and interstitial fluids. APOE is a core component of plasma lipoproteins and is involved in their production, conversion and clearance. Apolipoproteins are amphipathic molecules that interact both with lipids of the lipoprotein particle core and the aqueous environment of the plasma. As such, APOE associates with chylomicrons, chylomicron remnants, very low density lipoproteins (VLDL) and intermediate density lipoproteins (IDL) but shows a preferential binding to high-density lipoproteins (HDL). It also binds a wide range of cellular receptors including the LDL receptor/LDLR, the LDL receptor-related proteins LRP1, LRP2 and LRP8 and the very low-density lipoprotein receptor/VLDLR that mediate the cellular uptake of the APOE-containing lipoprotein particles. Finally, APOE also has a heparin-binding activity and binds heparan-sulfate proteoglycans on the surface of cells, a property that supports the capture and the receptor-mediated uptake of APOE-containing lipoproteins by cells. A main function of APOE is to mediate lipoprotein clearance through the uptake of chylomicrons, VLDLs, and HDLs by hepatocytes. APOE is also involved in the biosynthesis by the liver of VLDLs as well as their uptake by peripheral tissues ensuring the delivery of triglycerides and energy storage in muscle, heart and adipose tissues. By participating in the lipoprotein-mediated distribution of lipids among tissues, APOE plays a critical role in plasma and tissues lipid homeostasis. APOE is also involved in two steps of reverse cholesterol transport, the HDLs-mediated transport of cholesterol from peripheral tissues to the liver, and thereby plays an important role in cholesterol homeostasis. First, it is functionally associated with ABCA1 in the biogenesis of HDLs in tissues. Second, it is enriched in circulating HDLs and mediates their uptake by hepatocytes. APOE also plays an important role in lipid transport in the central nervous system, regulating neuron survival and sprouting. This chain is Apolipoprotein E (Apoe), found in Arvicanthis niloticus (African grass rat).